Reading from the N-terminus, the 265-residue chain is Shikimate dehydrogenase (NADP(+)) (265 aa).

Residues S15–S17 and T62 contribute to the shikimate site. The Proton acceptor role is filled by K66. Shikimate is bound by residues N87 and D102. NADP(+) contacts are provided by residues G125–A129, N149–K154, and L209. Y211 contributes to the shikimate binding site. An NADP(+)-binding site is contributed by G233.

The protein belongs to the shikimate dehydrogenase family. In terms of assembly, homodimer.

It carries out the reaction shikimate + NADP(+) = 3-dehydroshikimate + NADPH + H(+). The protein operates within metabolic intermediate biosynthesis; chorismate biosynthesis; chorismate from D-erythrose 4-phosphate and phosphoenolpyruvate: step 4/7. Its function is as follows. Involved in the biosynthesis of the chorismate, which leads to the biosynthesis of aromatic amino acids. Catalyzes the reversible NADPH linked reduction of 3-dehydroshikimate (DHSA) to yield shikimate (SA). This is Shikimate dehydrogenase (NADP(+)) from Legionella pneumophila (strain Corby).